We begin with the raw amino-acid sequence, 1342 residues long: DNA-directed RNA polymerase subunit beta (1342 aa).

This sequence belongs to the RNA polymerase beta chain family. As to quaternary structure, the RNAP catalytic core consists of 2 alpha, 1 beta, 1 beta' and 1 omega subunit. When a sigma factor is associated with the core the holoenzyme is formed, which can initiate transcription.

The catalysed reaction is RNA(n) + a ribonucleoside 5'-triphosphate = RNA(n+1) + diphosphate. DNA-dependent RNA polymerase catalyzes the transcription of DNA into RNA using the four ribonucleoside triphosphates as substrates. In Edwardsiella ictaluri (strain 93-146), this protein is DNA-directed RNA polymerase subunit beta.